We begin with the raw amino-acid sequence, 103 residues long: Small ribosomal subunit protein bS6c (103 aa).

The protein belongs to the bacterial ribosomal protein bS6 family.

It localises to the plastid. Its subcellular location is the chloroplast. Functionally, binds together with bS18 to 16S ribosomal RNA. This chain is Small ribosomal subunit protein bS6c (rps6), found in Cyanidium caldarium (Red alga).